The following is a 153-amino-acid chain: MKLNELYNNIGAKKNKKRIARGIGSGKGKTGGRGIKGQKSRSGVAIKGFEGGQTPIIKRLPKRGFNCISTKKYNIINIYNIEEALADGRLSADDNITKEKLVEARVVNNKNNKKLVKLLSICSDDFAAPLSLKLDAYSSKAKDLIEKAGGKLL.

The disordered stretch occupies residues 21-41; sequence RGIGSGKGKTGGRGIKGQKSR. Positions 23–35 are enriched in gly residues; the sequence is IGSGKGKTGGRGI.

The protein belongs to the universal ribosomal protein uL15 family. Part of the 50S ribosomal subunit.

Binds to the 23S rRNA. The sequence is that of Large ribosomal subunit protein uL15 from Rickettsia africae (strain ESF-5).